The following is a 337-amino-acid chain: Anthranilate phosphoribosyltransferase (337 aa).

Residues Gly-81, Gly-84–Asp-85, Ser-89, Asn-91–Thr-94, Lys-109–Ser-117, and Ala-121 contribute to the 5-phospho-alpha-D-ribose 1-diphosphate site. Gly-81 provides a ligand contact to anthranilate. Residue Ser-93 coordinates Mg(2+). Asn-112 contributes to the anthranilate binding site. Residue Arg-167 coordinates anthranilate. Asp-226 and Glu-227 together coordinate Mg(2+).

Belongs to the anthranilate phosphoribosyltransferase family. Homodimer. The cofactor is Mg(2+).

The enzyme catalyses N-(5-phospho-beta-D-ribosyl)anthranilate + diphosphate = 5-phospho-alpha-D-ribose 1-diphosphate + anthranilate. Its pathway is amino-acid biosynthesis; L-tryptophan biosynthesis; L-tryptophan from chorismate: step 2/5. Catalyzes the transfer of the phosphoribosyl group of 5-phosphorylribose-1-pyrophosphate (PRPP) to anthranilate to yield N-(5'-phosphoribosyl)-anthranilate (PRA). The sequence is that of Anthranilate phosphoribosyltransferase from Methylorubrum extorquens (strain CM4 / NCIMB 13688) (Methylobacterium extorquens).